A 164-amino-acid chain; its full sequence is Peptidyl-prolyl cis-trans isomerase A-like 4F (164 aa).

Positions 7–163 (FFEITRDGKP…KKITIADCGQ (157 aa)) constitute a PPIase cyclophilin-type domain.

Belongs to the cyclophilin-type PPIase family. PPIase A subfamily.

The protein resides in the cytoplasm. It carries out the reaction [protein]-peptidylproline (omega=180) = [protein]-peptidylproline (omega=0). In terms of biological role, PPIases accelerate the folding of proteins. It catalyzes the cis-trans isomerization of proline imidic peptide bonds in oligopeptides. This is Peptidyl-prolyl cis-trans isomerase A-like 4F from Homo sapiens (Human).